We begin with the raw amino-acid sequence, 172 residues long: MASSYRKPTVASTSQKRKVGPKPELTEEQKQEVREAFDLFDADGSGTIDVKELKVAMRALGFEPRKEEMKRMIADVDKEGTGKISFNDFLAVMTQKMAEKDTKEEILKAFRLFDDDETGKISFKNLKRVAKELGENLTDEELQEMIDEADRDGDGEVNEDEFLRIMKKTNLY.

Positions 1 to 30 (MASSYRKPTVASTSQKRKVGPKPELTEEQK) are disordered. EF-hand domains lie at 28-63 (EQKQEVREAFDLFDADGSGTIDVKELKVAMRALGFE), 64-99 (PRKEEMKRMIADVDKEGTGKISFNDFLAVMTQKMAE), 101-136 (DTKEEILKAFRLFDDDETGKISFKNLKRVAKELGEN), and 137-172 (LTDEELQEMIDEADRDGDGEVNEDEFLRIMKKTNLY). Ca(2+)-binding residues include aspartate 41, aspartate 43, serine 45, threonine 47, and glutamate 52. Residues aspartate 150, aspartate 152, aspartate 154, glutamate 156, and glutamate 161 each contribute to the Ca(2+) site.

The protein belongs to the centrin family. Monomer. Interacts with CIMAP3. Interacts with USP49.

The protein resides in the cytoplasm. It localises to the cytoskeleton. It is found in the microtubule organizing center. Its subcellular location is the centrosome. Functionally, plays a fundamental role in microtubule-organizing center structure and function. Plays a role in sperm cilia formation. This chain is Centrin-1 (CETN1), found in Bos taurus (Bovine).